The sequence spans 393 residues: MTDIQLNGKSTLDTPSATMSAKEKEAKLKSADENNKPPNYKRISDDDLYRHSSQYRMWSYTKDQLQEKRVDTNARAIAYIEENLLKFREAHNLTEEEIKVLEAKAIPLTMEEELDLVNFYAKKVQVIAQHLNLPTEVVATAISFFRRFFLENSVMQIDPKSIVHTTIFLACKSENYFISVDSFAQKAKSTRDSVLKFEFKLLESLKFSLLNHHPYKPLHGFFLDIQNVLYGKVDLNYMGQIYDRCKKRITAALLTDVVYFYTPPQITLATLLIEDEALVTRYLETKFPSREGSQESVPGNEKEEPQNDASTTEKNKEKSTESEEYSIDSAKLLTIIRECKSIIEDCKPPSTEEAKKIAAKNYYCQNPSTLIQKLKRKLNGEDTSSTVEKKQKT.

Residues 1 to 19 (MTDIQLNGKSTLDTPSATM) are compositionally biased toward polar residues. Disordered regions lie at residues 1-45 (MTDI…RISD) and 289-325 (SREG…SEEY). 2 stretches are compositionally biased toward basic and acidic residues: residues 21-35 (AKEK…DENN) and 300-321 (NEKE…KSTE).

The protein belongs to the cyclin family. Cyclin C subfamily. As to quaternary structure, CCL1 and KIN28 form the TFIIK complex, a component of TFIIH holo complex. Component of a complex consisting of KIN28, CCL1 and TFB3.

Regulatory component of the TFIIK complex (KIN28-CCL1 dimer) which is the protein kinase component of transcription factor IIH (TFIIH) and phosphorylates the C-terminal domain of RNA polymerase II during transition from transcription to elongation after preinitiation complex (PIC) formation, thereby positively regulating transcription. TFIIH (or factor B) is essential for both basal and activated transcription, and is involved in nucleotide excision repair (NER) of damaged DNA. TFIIH has DNA-dependent ATPase activity and is essential for polymerase II transcription in vitro. The chain is Cyclin CCL1 (CCL1) from Saccharomyces cerevisiae (strain ATCC 204508 / S288c) (Baker's yeast).